The sequence spans 164 residues: Biotin carboxyl carrier protein of acetyl-CoA carboxylase (164 aa).

Residues G86 to V162 form the Biotinyl-binding domain. N6-biotinyllysine is present on K128.

Homodimer.

The protein operates within lipid metabolism; fatty acid biosynthesis. In terms of biological role, this protein is a component of the acetyl coenzyme A carboxylase complex; first, biotin carboxylase catalyzes the carboxylation of the carrier protein and then the transcarboxylase transfers the carboxyl group to form malonyl-CoA. The sequence is that of Biotin carboxyl carrier protein of acetyl-CoA carboxylase (accB) from Chlamydia trachomatis serovar D (strain ATCC VR-885 / DSM 19411 / UW-3/Cx).